A 36-amino-acid chain; its full sequence is Photosystem II reaction center protein M (36 aa).

A helical membrane pass occupies residues 5–25; it reads ILAFIATALFILVPTAFLLII.

The protein belongs to the PsbM family. As to quaternary structure, PSII is composed of 1 copy each of membrane proteins PsbA, PsbB, PsbC, PsbD, PsbE, PsbF, PsbH, PsbI, PsbJ, PsbK, PsbL, PsbM, PsbT, PsbX, PsbY, PsbZ, Psb30/Ycf12, at least 3 peripheral proteins of the oxygen-evolving complex and a large number of cofactors. It forms dimeric complexes.

Its subcellular location is the plastid. The protein localises to the chloroplast thylakoid membrane. In terms of biological role, one of the components of the core complex of photosystem II (PSII). PSII is a light-driven water:plastoquinone oxidoreductase that uses light energy to abstract electrons from H(2)O, generating O(2) and a proton gradient subsequently used for ATP formation. It consists of a core antenna complex that captures photons, and an electron transfer chain that converts photonic excitation into a charge separation. This subunit is found at the monomer-monomer interface. In Panax ginseng (Korean ginseng), this protein is Photosystem II reaction center protein M.